The chain runs to 512 residues: Endoglucanase 14 (512 aa).

Residues 1 to 22 (MLAAAIELVVIATSCMVRDAHG) form the signal peptide. N76 is a glycosylation site (N-linked (GlcNAc...) asparagine). The active-site Nucleophile is D103. Residues N192 and N215 are each glycosylated (N-linked (GlcNAc...) asparagine). Active-site residues include H433, D484, and E493.

The protein belongs to the glycosyl hydrolase 9 (cellulase E) family.

It localises to the secreted. It catalyses the reaction Endohydrolysis of (1-&gt;4)-beta-D-glucosidic linkages in cellulose, lichenin and cereal beta-D-glucans.. This Oryza sativa subsp. japonica (Rice) protein is Endoglucanase 14.